The primary structure comprises 22 residues: Pectinesterase (22 aa).

The Proton donor role is filled by Asp6. Substrate-binding residues include Arg19 and Trp21.

Belongs to the pectinesterase family.

It localises to the secreted. It is found in the cell wall. The catalysed reaction is [(1-&gt;4)-alpha-D-galacturonosyl methyl ester](n) + n H2O = [(1-&gt;4)-alpha-D-galacturonosyl](n) + n methanol + n H(+). Its pathway is glycan metabolism; pectin degradation; 2-dehydro-3-deoxy-D-gluconate from pectin: step 1/5. The sequence is that of Pectinesterase from Capsicum chinense (Scotch bonnet).